The chain runs to 564 residues: Proline--tRNA ligase (564 aa).

Belongs to the class-II aminoacyl-tRNA synthetase family. ProS type 1 subfamily. As to quaternary structure, homodimer.

The protein localises to the cytoplasm. It carries out the reaction tRNA(Pro) + L-proline + ATP = L-prolyl-tRNA(Pro) + AMP + diphosphate. In terms of biological role, catalyzes the attachment of proline to tRNA(Pro) in a two-step reaction: proline is first activated by ATP to form Pro-AMP and then transferred to the acceptor end of tRNA(Pro). As ProRS can inadvertently accommodate and process non-cognate amino acids such as alanine and cysteine, to avoid such errors it has two additional distinct editing activities against alanine. One activity is designated as 'pretransfer' editing and involves the tRNA(Pro)-independent hydrolysis of activated Ala-AMP. The other activity is designated 'posttransfer' editing and involves deacylation of mischarged Ala-tRNA(Pro). The misacylated Cys-tRNA(Pro) is not edited by ProRS. The polypeptide is Proline--tRNA ligase (Xylella fastidiosa (strain M12)).